Consider the following 289-residue polypeptide: ATP synthase subunit a (289 aa).

6 helical membrane passes run 43-63, 104-124, 160-180, 193-213, 232-252, and 259-279; these read AFHL…LLIF, IAPL…VDLI, FCVF…GGFI, IFVQ…TLIA, VFIL…GLGV, and AVFH…LTIV.

Belongs to the ATPase A chain family. F-type ATPases have 2 components, CF(1) - the catalytic core - and CF(0) - the membrane proton channel. CF(1) has five subunits: alpha(3), beta(3), gamma(1), delta(1), epsilon(1). CF(0) has three main subunits: a(1), b(2) and c(9-12). The alpha and beta chains form an alternating ring which encloses part of the gamma chain. CF(1) is attached to CF(0) by a central stalk formed by the gamma and epsilon chains, while a peripheral stalk is formed by the delta and b chains.

The protein localises to the cell inner membrane. Key component of the proton channel; it plays a direct role in the translocation of protons across the membrane. This Pseudomonas putida (strain ATCC 47054 / DSM 6125 / CFBP 8728 / NCIMB 11950 / KT2440) protein is ATP synthase subunit a.